An 81-amino-acid chain; its full sequence is Costars family protein ABRACL (81 aa).

It belongs to the costars family.

The polypeptide is Costars family protein ABRACL (abracl) (Danio rerio (Zebrafish)).